We begin with the raw amino-acid sequence, 550 residues long: Chaperonin GroEL (550 aa).

ATP-binding positions include 30 to 33 (TLGP), Lys-51, 87 to 91 (DGTTT), Gly-415, 480 to 482 (NAA), and Asp-496.

It belongs to the chaperonin (HSP60) family. As to quaternary structure, forms a cylinder of 14 subunits composed of two heptameric rings stacked back-to-back. Interacts with the co-chaperonin GroES.

The protein resides in the cytoplasm. The enzyme catalyses ATP + H2O + a folded polypeptide = ADP + phosphate + an unfolded polypeptide.. In terms of biological role, together with its co-chaperonin GroES, plays an essential role in assisting protein folding. The GroEL-GroES system forms a nano-cage that allows encapsulation of the non-native substrate proteins and provides a physical environment optimized to promote and accelerate protein folding. The sequence is that of Chaperonin GroEL from Variovorax paradoxus (strain S110).